The primary structure comprises 309 residues: Probable 5-dehydro-4-deoxyglucarate dehydratase (309 aa).

This sequence belongs to the DapA family.

It carries out the reaction 5-dehydro-4-deoxy-D-glucarate + H(+) = 2,5-dioxopentanoate + CO2 + H2O. Its pathway is carbohydrate acid metabolism; D-glucarate degradation; 2,5-dioxopentanoate from D-glucarate: step 2/2. The sequence is that of Probable 5-dehydro-4-deoxyglucarate dehydratase from Saccharopolyspora erythraea (strain ATCC 11635 / DSM 40517 / JCM 4748 / NBRC 13426 / NCIMB 8594 / NRRL 2338).